Here is a 215-residue protein sequence, read N- to C-terminus: MKGVYFVSGIDTDIGKTIATGVLAKQLLQQGKSVITQKPVQTGCQNIADDIAVHRKIMGIPMQEADKQGLTMPEIFSYPASPHLAARLDGRALDLDKIRTATQQLAAQYEIVLVEGAGGLMVPLTENLLTIDYIRQQGYPVILITSGRLGSINHTLLSFAALKQYGIRLHSLVFNHIHDSRDAHVAQDSLNYLKCRLKDSFPEAEWLELAKTDAV.

Position 13–18 (13–18 (DIGKTI)) interacts with ATP. Thr-17 contacts Mg(2+). The active site involves Lys-38. Thr-42 contacts substrate. Residues Asp-50, 115 to 118 (EGAG), and 175 to 176 (NH) contribute to the ATP site. Residues Asp-50 and Glu-115 each coordinate Mg(2+).

The protein belongs to the dethiobiotin synthetase family. Homodimer. Mg(2+) is required as a cofactor.

It is found in the cytoplasm. It carries out the reaction (7R,8S)-7,8-diammoniononanoate + CO2 + ATP = (4R,5S)-dethiobiotin + ADP + phosphate + 3 H(+). Its pathway is cofactor biosynthesis; biotin biosynthesis; biotin from 7,8-diaminononanoate: step 1/2. Its function is as follows. Catalyzes a mechanistically unusual reaction, the ATP-dependent insertion of CO2 between the N7 and N8 nitrogen atoms of 7,8-diaminopelargonic acid (DAPA, also called 7,8-diammoniononanoate) to form a ureido ring. The protein is ATP-dependent dethiobiotin synthetase BioD of Neisseria meningitidis serogroup A / serotype 4A (strain DSM 15465 / Z2491).